We begin with the raw amino-acid sequence, 254 residues long: Imidazole glycerol phosphate synthase subunit HisF (254 aa).

Residues aspartate 12 and aspartate 131 contribute to the active site.

Belongs to the HisA/HisF family. Heterodimer of HisH and HisF.

It localises to the cytoplasm. The enzyme catalyses 5-[(5-phospho-1-deoxy-D-ribulos-1-ylimino)methylamino]-1-(5-phospho-beta-D-ribosyl)imidazole-4-carboxamide + L-glutamine = D-erythro-1-(imidazol-4-yl)glycerol 3-phosphate + 5-amino-1-(5-phospho-beta-D-ribosyl)imidazole-4-carboxamide + L-glutamate + H(+). It participates in amino-acid biosynthesis; L-histidine biosynthesis; L-histidine from 5-phospho-alpha-D-ribose 1-diphosphate: step 5/9. Its function is as follows. IGPS catalyzes the conversion of PRFAR and glutamine to IGP, AICAR and glutamate. The HisF subunit catalyzes the cyclization activity that produces IGP and AICAR from PRFAR using the ammonia provided by the HisH subunit. The sequence is that of Imidazole glycerol phosphate synthase subunit HisF from Kocuria rhizophila (strain ATCC 9341 / DSM 348 / NBRC 103217 / DC2201).